Here is a 400-residue protein sequence, read N- to C-terminus: Phosphoglycerate kinase (400 aa).

Substrate contacts are provided by residues 21-23 (DFN), arginine 36, 59-62 (HLGR), arginine 119, and arginine 160. ATP is bound by residues lysine 211, glutamate 329, and 356–359 (GGDS).

Belongs to the phosphoglycerate kinase family. In terms of assembly, monomer.

It localises to the cytoplasm. It carries out the reaction (2R)-3-phosphoglycerate + ATP = (2R)-3-phospho-glyceroyl phosphate + ADP. It participates in carbohydrate degradation; glycolysis; pyruvate from D-glyceraldehyde 3-phosphate: step 2/5. The sequence is that of Phosphoglycerate kinase from Lactiplantibacillus plantarum (strain ATCC BAA-793 / NCIMB 8826 / WCFS1) (Lactobacillus plantarum).